A 303-amino-acid chain; its full sequence is Vesicle-trafficking protein SEC22c (303 aa).

Residues 1–183 (MSVIFFACVV…EPAPNFRMEP (183 aa)) lie on the Cytoplasmic side of the membrane. The Longin domain occupies 8 to 119 (CVVRVRDGLP…YAFLEFDSII (112 aa)). Residues 184-204 (VTALGILSLILNIMCAALNLI) traverse the membrane as a helical segment. Over 205–223 (RGVHLAEHSLQVAHEEIGN) the chain is Lumenal. A helical membrane pass occupies residues 224 to 244 (ILAFLVPFVACIFQCYLYLFY). At 245–248 (SPAR) the chain is on the cytoplasmic side. Residues 249 to 269 (TMKVVLMLLFICLGNMYLHGL) traverse the membrane as a helical segment. Residue Arg-270 is a topological domain, lumenal. Residues 271 to 291 (NLWQILFHIGVAFLSSYQILT) traverse the membrane as a helical segment. Residues 292-303 (RQLQEKQSDCGV) lie on the Cytoplasmic side of the membrane.

The protein belongs to the synaptobrevin family. Ubiquitously expressed.

It localises to the endoplasmic reticulum membrane. In terms of biological role, may be involved in vesicle transport between the ER and the Golgi complex. The chain is Vesicle-trafficking protein SEC22c (SEC22C) from Homo sapiens (Human).